Here is a 584-residue protein sequence, read N- to C-terminus: DNA damage-binding protein 2 (584 aa).

Residues 1 to 87 (MGPTTRARFV…PVAAAARSGR (87 aa)) form a disordered region. Over residues 8–20 (RFVHNRRRRRRRG) the composition is skewed to basic residues. 2 stretches are compositionally biased toward acidic residues: residues 25–35 (PDDDDEEEDQQ) and 45–66 (DEGEEDAEEEGSGEVDDDDGEA). The segment at 122-140 (KPCFLCKMPGGHTTLTCPH) adopts a CCHC-type zinc-finger fold. WD repeat units lie at residues 192 to 232 (FHQR…EKIT), 236 to 278 (VHSC…SLLN), 288 to 327 (STWRMIYGMDFNSDKGLLLVADSFGFLHLLDRRLKARIGD), 333 to 373 (KKGS…PNSA), 378 to 418 (AHGR…LESP), 438 to 481 (EWDP…LAEV), and 484 to 523 (PDITTISPVNKLHPRDDILASGSSRSIFIWKPKTESDATE). The short motif at 351-366 (LLSSGNDHYARIWDTR) is the DWD box element. The span at 517–532 (TESDATEERNREKAKE) shows a compositional bias: basic and acidic residues. The disordered stretch occupies residues 517 to 584 (TESDATEERN…TIKGKGKSKV (68 aa)). Residues 562–584 (KKKKKAKKTRFTHTIKGKGKSKV) show a composition bias toward basic residues.

Belongs to the WD repeat DDB2/WDR76 family. In terms of assembly, component of the UV-DDB complex, which is composed of DDB1 and DDB2. In terms of tissue distribution, expressed in proliferating tissues such as shoot apical meristem (SAM), root tips and young leaves. Not detected in mature leaves.

It localises to the nucleus. Its function is as follows. Required for DNA repair. Binds to DDB1 to form the UV-damaged DNA-binding protein complex (the UV-DDB complex). The UV-DDB complex may recognize UV-induced DNA damage and recruit proteins of the nucleotide excision repair pathway (the NER pathway) to initiate DNA repair. May function as the substrate recognition module for a DCX (DDB1-CUL4-X-box) E3 ubiquitin-protein ligase complex. This Oryza sativa subsp. japonica (Rice) protein is DNA damage-binding protein 2.